The chain runs to 1117 residues: Cytospin-A (1117 aa).

Disordered regions lie at residues 1 to 176, 293 to 323, and 358 to 390; these read MKKA…NQIS, SLSPEITPGNQSDGGGTLTSSVEGSAPGSVE, and SSDDALDAPSSSESEGIPSIERSRKGSSGNASE. Low complexity-rich tracts occupy residues 45 to 72 and 99 to 119; these read TTASLSKTKSSDDLLAGMAGGVTVTNGV and KISTGTSSSTKRSTSIGNKES. Composition is skewed to basic and acidic residues over residues 120–131 and 158–171; these read SSTRERLRERTR and TTTECDVRMSKSKS. Residues 168–280 are a coiled coil; it reads KSKSDNQISD…LNALGFSLEQ (113 aa). Positions 293–303 are enriched in polar residues; sequence SLSPEITPGNQ. Positions 358–377 are enriched in low complexity; the sequence is SSDDALDAPSSSESEGIPSI. Phosphoserine occurs at positions 384, 385, and 389. 2 coiled-coil regions span residues 394–449 and 487–807; these read ACLT…MESL and RYME…RGRV. Residues 852–878 are disordered; the sequence is SQVPNPTAAAIPRTPLSPSPMKTPPAA. 3 positions are modified to phosphoserine: S868, S881, and S887. Residues 920-997 are disordered; that stretch reads TSSTSRPASL…PTTRSRIREE (78 aa). A compositionally biased stretch (basic and acidic residues) spans 946 to 956; it reads RSSEEMKRDIS. The span at 971–990 shows a compositional bias: low complexity; the sequence is TTSPQLSLSSSPTASVTPTT. A Calponin-homology (CH) domain is found at 1011–1116; it reads GSKRNALLKW…YVTAIYKYFE (106 aa).

This sequence belongs to the cytospin-A family. May interact with both microtubules and actin cytoskeleton.

Its subcellular location is the cytoplasm. It localises to the cytoskeleton. The protein localises to the spindle. It is found in the cell junction. The protein resides in the gap junction. Involved in cytokinesis and spindle organization. May play a role in actin cytoskeleton organization and microtubule stabilization and hence required for proper cell adhesion and migration. This is Cytospin-A (SPECC1L) from Canis lupus familiaris (Dog).